Consider the following 205-residue polypeptide: Holliday junction branch migration complex subunit RuvA (205 aa).

Residues 1–68 (MIGYLEGTLL…QPKPVLIGFN (68 aa)) form a domain I region. Residues 69 to 146 (TEEEKDFFHL…RFADAGHSSA (78 aa)) are domain II. The segment at 147–151 (PDVPV) is flexible linker. The tract at residues 152-205 (TGSLADQTVEVLVGQLGYKPNEARLMVAGALKRNPDVSTPEALFDEIFKHGQAQ) is domain III.

This sequence belongs to the RuvA family. Homotetramer. Forms an RuvA(8)-RuvB(12)-Holliday junction (HJ) complex. HJ DNA is sandwiched between 2 RuvA tetramers; dsDNA enters through RuvA and exits via RuvB. An RuvB hexamer assembles on each DNA strand where it exits the tetramer. Each RuvB hexamer is contacted by two RuvA subunits (via domain III) on 2 adjacent RuvB subunits; this complex drives branch migration. In the full resolvosome a probable DNA-RuvA(4)-RuvB(12)-RuvC(2) complex forms which resolves the HJ.

It is found in the cytoplasm. Its function is as follows. The RuvA-RuvB-RuvC complex processes Holliday junction (HJ) DNA during genetic recombination and DNA repair, while the RuvA-RuvB complex plays an important role in the rescue of blocked DNA replication forks via replication fork reversal (RFR). RuvA specifically binds to HJ cruciform DNA, conferring on it an open structure. The RuvB hexamer acts as an ATP-dependent pump, pulling dsDNA into and through the RuvAB complex. HJ branch migration allows RuvC to scan DNA until it finds its consensus sequence, where it cleaves and resolves the cruciform DNA. The chain is Holliday junction branch migration complex subunit RuvA from Desulfosudis oleivorans (strain DSM 6200 / JCM 39069 / Hxd3) (Desulfococcus oleovorans).